The chain runs to 419 residues: DNA-directed RNA polymerase I subunit RPA49 (419 aa).

Ser35 and Ser163 each carry phosphoserine. Lys373 carries the N6-acetyllysine modification. Residues 397-419 form a disordered region; that stretch reads GTLSLPLPPAQTSDRLAKRRKIT.

This sequence belongs to the eukaryotic RPA49/POLR1E RNA polymerase subunit family. In terms of assembly, component of the RNA polymerase I (Pol I) complex consisting of 13 subunits: a ten-subunit catalytic core composed of POLR1A/RPA1, POLR1B/RPA2, POLR1C/RPAC1, POLR1D/RPAC2, POLR1H/RPA12, POLR2E/RPABC1, POLR2F/RPABC2, POLR2H/RPABC3, POLR2K/RPABC4 and POLR2L/RPABC5; a mobile stalk subunit POLR1F/RPA43 protruding from the core and additional subunits homologous to general transcription factors POLR1E/RPA49 and POLR1G/RPA34. Forms a heterodimer with POLR1G/RPA34. Interacts with POLR1G. Also binds UBTF/UBF. Interacts with PWP1. Acetylated at Lys-373 by CREBBP/CBP, leading to decreased RNA polymerase I transcription. In normal conditions, deacetylated by SIRT7, promoting the association of RNA polymerase I with the rDNA promoter region and coding region. In response to stress, SIRT7 is released from nucleoli leading to hyperacetylation of POLR1E/PAF53 and decreased association of RNA polymerase I with the rDNA promoter region.

The protein localises to the nucleus. Its subcellular location is the nucleolus. Functionally, component of RNA polymerase I (Pol I), a DNA-dependent RNA polymerase which synthesizes ribosomal RNA precursors using the four ribonucleoside triphosphates as substrates. Appears to be involved in the formation of the initiation complex at the promoter by mediating the interaction between Pol I and UBTF/UBF. The chain is DNA-directed RNA polymerase I subunit RPA49 (POLR1E) from Homo sapiens (Human).